A 184-amino-acid chain; its full sequence is Peptide deformylase 2 (184 aa).

Residues cysteine 110 and histidine 153 each contribute to the Fe cation site. Residue glutamate 154 is part of the active site. Histidine 157 contributes to the Fe cation binding site.

Belongs to the polypeptide deformylase family. It depends on Fe(2+) as a cofactor.

The enzyme catalyses N-terminal N-formyl-L-methionyl-[peptide] + H2O = N-terminal L-methionyl-[peptide] + formate. Functionally, removes the formyl group from the N-terminal Met of newly synthesized proteins. Requires at least a dipeptide for an efficient rate of reaction. N-terminal L-methionine is a prerequisite for activity but the enzyme has broad specificity at other positions. The protein is Peptide deformylase 2 of Bacillus anthracis.